The sequence spans 153 residues: MNIIEGKLIGQSLKFGITIGRFNEFIGGKLLDGAVDALIRHGVDEKDIEIAWVPGAFEIPLIAKKMAKSKKYDGIICLGAVIRGATTHYDYVASEVSKGIAKITLDEEVPVIFGVLTTENIEQAIERAGTKAGNKGYEAACTAIEMANIINII.

Residues Phe22, 56-58, and 80-82 each bind 5-amino-6-(D-ribitylamino)uracil; these read AFE and AVI. 85–86 provides a ligand contact to (2S)-2-hydroxy-3-oxobutyl phosphate; it reads AT. His88 (proton donor) is an active-site residue. Phe113 contacts 5-amino-6-(D-ribitylamino)uracil. Arg127 is a binding site for (2S)-2-hydroxy-3-oxobutyl phosphate.

Belongs to the DMRL synthase family.

The enzyme catalyses (2S)-2-hydroxy-3-oxobutyl phosphate + 5-amino-6-(D-ribitylamino)uracil = 6,7-dimethyl-8-(1-D-ribityl)lumazine + phosphate + 2 H2O + H(+). Its pathway is cofactor biosynthesis; riboflavin biosynthesis; riboflavin from 2-hydroxy-3-oxobutyl phosphate and 5-amino-6-(D-ribitylamino)uracil: step 1/2. Its function is as follows. Catalyzes the formation of 6,7-dimethyl-8-ribityllumazine by condensation of 5-amino-6-(D-ribitylamino)uracil with 3,4-dihydroxy-2-butanone 4-phosphate. This is the penultimate step in the biosynthesis of riboflavin. The sequence is that of 6,7-dimethyl-8-ribityllumazine synthase from Clostridium tetani (strain Massachusetts / E88).